Here is a 492-residue protein sequence, read N- to C-terminus: Phenylalanine--tRNA ligase alpha subunit (492 aa).

Residues Thr-335, 374 to 376 (QLE), and Tyr-414 each bind L-phenylalanine. Glu-416 contacts Mg(2+). Phe-439 is a binding site for L-phenylalanine.

It belongs to the class-II aminoacyl-tRNA synthetase family. Phe-tRNA synthetase alpha subunit type 2 subfamily. In terms of assembly, tetramer of two alpha and two beta subunits. The cofactor is Mg(2+).

Its subcellular location is the cytoplasm. It catalyses the reaction tRNA(Phe) + L-phenylalanine + ATP = L-phenylalanyl-tRNA(Phe) + AMP + diphosphate + H(+). The protein is Phenylalanine--tRNA ligase alpha subunit of Methanosarcina acetivorans (strain ATCC 35395 / DSM 2834 / JCM 12185 / C2A).